We begin with the raw amino-acid sequence, 485 residues long: UDP-N-acetylmuramate--L-alanine ligase (485 aa).

125–131 is an ATP binding site; that stretch reads GTHGKTT.

This sequence belongs to the MurCDEF family.

The protein localises to the cytoplasm. The enzyme catalyses UDP-N-acetyl-alpha-D-muramate + L-alanine + ATP = UDP-N-acetyl-alpha-D-muramoyl-L-alanine + ADP + phosphate + H(+). It functions in the pathway cell wall biogenesis; peptidoglycan biosynthesis. Cell wall formation. This chain is UDP-N-acetylmuramate--L-alanine ligase, found in Stutzerimonas stutzeri (strain A1501) (Pseudomonas stutzeri).